A 214-amino-acid chain; its full sequence is Killer cell lectin-like receptor subfamily B member 1 (214 aa).

Over 1 to 42 the chain is Cytoplasmic; sequence MDAPVLYAELNLAETRGLRCTSAPSLPQDACQGPGWHRVALK. Residues 43 to 63 traverse the membrane as a helical; Signal-anchor for type II membrane protein segment; it reads LGCAGLIFLLMVLSVLVGFLV. At 64–214 the chain is on the extracellular side; the sequence is QKPLIEKCSV…WICQKTLKHV (151 aa). The C-type lectin domain occupies 98–208; that stretch reads HCDKCLFTSQ…CSSDNHWICQ (111 aa). Intrachain disulfides connect cysteine 119-cysteine 207 and cysteine 186-cysteine 199.

Its subcellular location is the membrane. The chain is Killer cell lectin-like receptor subfamily B member 1 (Klrb1) from Mus musculus (Mouse).